We begin with the raw amino-acid sequence, 389 residues long: Nicotinate phosphoribosyltransferase (389 aa).

His-216 carries the post-translational modification Phosphohistidine; by autocatalysis.

Belongs to the NAPRTase family. Post-translationally, transiently phosphorylated on a His residue during the reaction cycle. Phosphorylation strongly increases the affinity for substrates and increases the rate of nicotinate D-ribonucleotide production. Dephosphorylation regenerates the low-affinity form of the enzyme, leading to product release.

The catalysed reaction is nicotinate + 5-phospho-alpha-D-ribose 1-diphosphate + ATP + H2O = nicotinate beta-D-ribonucleotide + ADP + phosphate + diphosphate. Its pathway is cofactor biosynthesis; NAD(+) biosynthesis; nicotinate D-ribonucleotide from nicotinate: step 1/1. Its function is as follows. Catalyzes the synthesis of beta-nicotinate D-ribonucleotide from nicotinate and 5-phospho-D-ribose 1-phosphate at the expense of ATP. The chain is Nicotinate phosphoribosyltransferase from Ralstonia nicotianae (strain ATCC BAA-1114 / GMI1000) (Ralstonia solanacearum).